Reading from the N-terminus, the 80-residue chain is Large ribosomal subunit protein bL31 (80 aa).

Positions 16, 18, 38, and 41 each coordinate Zn(2+).

Belongs to the bacterial ribosomal protein bL31 family. Type A subfamily. Part of the 50S ribosomal subunit. The cofactor is Zn(2+).

Functionally, binds the 23S rRNA. The polypeptide is Large ribosomal subunit protein bL31 (Mycobacterium bovis (strain ATCC BAA-935 / AF2122/97)).